The following is a 103-amino-acid chain: UPF0145 protein BC_1816 (103 aa).

This sequence belongs to the UPF0145 family.

The polypeptide is UPF0145 protein BC_1816 (Bacillus cereus (strain ATCC 14579 / DSM 31 / CCUG 7414 / JCM 2152 / NBRC 15305 / NCIMB 9373 / NCTC 2599 / NRRL B-3711)).